The following is a 313-amino-acid chain: Ribosomal RNA small subunit methyltransferase H (313 aa).

S-adenosyl-L-methionine-binding positions include 37–39 (GGH), Asp-57, Phe-82, Asp-104, and Gln-111.

Belongs to the methyltransferase superfamily. RsmH family.

It is found in the cytoplasm. It catalyses the reaction cytidine(1402) in 16S rRNA + S-adenosyl-L-methionine = N(4)-methylcytidine(1402) in 16S rRNA + S-adenosyl-L-homocysteine + H(+). In terms of biological role, specifically methylates the N4 position of cytidine in position 1402 (C1402) of 16S rRNA. The polypeptide is Ribosomal RNA small subunit methyltransferase H (Alteromonas mediterranea (strain DSM 17117 / CIP 110805 / LMG 28347 / Deep ecotype)).